The primary structure comprises 378 residues: Putative zinc finger protein C09F5.3 (378 aa).

A compositionally biased stretch (basic residues) spans 1-14; the sequence is MRKTEKMKRPHNSS. Disordered regions lie at residues 1–36 and 61–80; these read MRKTEKMKRPHNSSHVKQEERADDSHSNSPASSKSI and TLSEHVPEKKPSISTSNSAP. Composition is skewed to basic and acidic residues over residues 16 to 26 and 62 to 71; these read VKQEERADDSH and LSEHVPEKKP. Residues 42-65 form a C2H2-type 1 zinc finger; it reads LKCELCSTVCSSISQLQSHTLSEH. The segment at 85 to 107 adopts a C2H2-type 2; degenerate zinc-finger fold; the sequence is VACQQCEDTFEDFAQFAIHMKSH. The segment at 204–226 adopts a C2H2-type 3; degenerate zinc-finger fold; sequence YGCALCATSYPSQLHLITHVQMS. Residues 231-250 are disordered; sequence TFYPPSLPIPTPPSPKSTPK. Residues 235–246 show a composition bias toward pro residues; it reads PSLPIPTPPSPK. 4 C2H2-type zinc fingers span residues 254–277, 284–306, 312–334, and 355–377; these read LQCSVCDESVLGEDGLDEHRLRKH, DKCADCQEPLLNETSFVEHCLRH, HHCPVCRQSLRSDSQIHAHCAYH, and FVCPICGEKLDDGFALIEHTKIH.

The protein localises to the nucleus. The protein is Putative zinc finger protein C09F5.3 of Caenorhabditis elegans.